Consider the following 138-residue polypeptide: Probable histone H2AXb (138 aa).

Residues 1 to 10 are compositionally biased toward gly residues; it reads MSSAGGGGGR. Residues 1 to 24 are disordered; sequence MSSAGGGGGRGKSKGSKSVSRSSK. The residue at position 135 (S135) is a Phosphoserine; by ATM and ATR. The [ST]-Q motif motif lies at 135–136; it reads SQ.

The protein belongs to the histone H2A family. As to quaternary structure, the nucleosome is a histone octamer containing two molecules each of H2A, H2B, H3 and H4 assembled in one H3-H4 heterotetramer and two H2A-H2B heterodimers. The octamer wraps approximately 147 bp of DNA. Interacts with numerous proteins required for DNA damage signaling and repair when phosphorylated on Ser-135. Post-translationally, phosphorylated to form H2AXS139ph (gamma-H2AX) in response to DNA double strand breaks (DSBs) generated by exogenous genotoxic agents and by stalled replication forks, and may also occur during meiotic recombination events. Phosphorylation can extend up to several thousand nucleosomes from the actual site of the DSB and may mark the surrounding chromatin for recruitment of proteins required for DNA damage signaling and repair. Widespread phosphorylation may also serve to amplify the damage signal or aid repair of persistent lesions. H2AXS139ph in response to ionizing radiation is mediated by ATM while defects in DNA replication induce H2AXS139ph subsequent to activation of ATR. Dephosphorylation of H2AXS139ph by PP2A is required for DNA DSB repair.

It is found in the nucleus. It localises to the chromosome. Its function is as follows. Variant histone H2A which replaces conventional H2A in a subset of nucleosomes. Nucleosomes wrap and compact DNA into chromatin, limiting DNA accessibility to the cellular machineries which require DNA as a template. Histones thereby play a central role in transcription regulation, DNA repair, DNA replication and chromosomal stability. DNA accessibility is regulated via a complex set of post-translational modifications of histones, also called histone code, and nucleosome remodeling. Required for checkpoint-mediated arrest of cell cycle progression in response to low doses of ionizing radiation and for efficient repair of DNA double strand breaks (DSBs) specifically when modified by C-terminal phosphorylation. This chain is Probable histone H2AXb, found in Oryza sativa subsp. indica (Rice).